We begin with the raw amino-acid sequence, 501 residues long: Type II secretion system protein E (501 aa).

Residue 262–269 participates in ATP binding; it reads GPTGSGKS. Positions 395, 398, 428, and 431 each coordinate Zn(2+).

Belongs to the GSP E family. As to quaternary structure, forms homooligomers; most probably hexamers. Interacts with ExeL/GspL. It depends on Zn(2+) as a cofactor.

The protein localises to the cell inner membrane. It catalyses the reaction ATP + H2O + cellular proteinSide 1 = ADP + phosphate + cellular proteinSide 2.. In terms of biological role, ATPase component of the type II secretion system required for the energy-dependent secretion of extracellular factors such as proteases and toxins from the periplasm. Acts as a molecular motor to provide the energy that is required for assembly of the pseudopilus and the extrusion of substrates generated in the cytoplasm. In Aeromonas hydrophila, this protein is Type II secretion system protein E (exeE).